Here is a 160-residue protein sequence, read N- to C-terminus: Cytochrome b6-f complex subunit 4 (160 aa).

Transmembrane regions (helical) follow at residues 36–56, 95–115, and 131–151; these read LLYI…GLSV, LLGV…PFIE, and TLFL…TLPI.

Belongs to the cytochrome b family. PetD subfamily. In terms of assembly, the 4 large subunits of the cytochrome b6-f complex are cytochrome b6, subunit IV (17 kDa polypeptide, petD), cytochrome f and the Rieske protein, while the 4 small subunits are petG, petL, petM and petN. The complex functions as a dimer.

The protein resides in the plastid. The protein localises to the chloroplast thylakoid membrane. Its function is as follows. Component of the cytochrome b6-f complex, which mediates electron transfer between photosystem II (PSII) and photosystem I (PSI), cyclic electron flow around PSI, and state transitions. The protein is Cytochrome b6-f complex subunit 4 of Tetradesmus obliquus (Green alga).